The chain runs to 62 residues: Conotoxin reg3.7 (62 aa).

The first 15 residues, 1 to 15, serve as a signal peptide directing secretion; it reads RVLLTICLLLFPLSA. The propeptide occupies 16 to 45; the sequence is LPLDGDQPADQPARHMQSAERNPRFDPVKR. The tract at residues 17–37 is disordered; the sequence is PLDGDQPADQPARHMQSAERN. 3 disulfides stabilise this stretch: Cys46–Cys60, Cys47–Cys58, and Cys52–Cys61. At Cys61 the chain carries Cysteine amide.

Belongs to the conotoxin M superfamily. As to expression, expressed by the venom duct.

It is found in the secreted. The sequence is that of Conotoxin reg3.7 from Conus regius (Crown cone).